We begin with the raw amino-acid sequence, 264 residues long: Transcription factor bHLH52 (264 aa).

The bHLH domain occupies 134 to 183 (RELSAQSIAARKRRRRITEKTQELGKLIPGSQKHNTAEMFNAAAKYVKFL).

As to quaternary structure, homodimer. As to expression, expressed constitutively in roots, leaves, stems, and flowers.

Its subcellular location is the nucleus. This chain is Transcription factor bHLH52 (BHLH52), found in Arabidopsis thaliana (Mouse-ear cress).